The sequence spans 268 residues: ELL-associated factor 1 (268 aa).

The segment at 106 to 268 (IQVKKTRAEG…LSESGSDSDD (163 aa)) is disordered. The segment covering 128–154 (TRPPQTSQPPPPPPPMPFRAPTKPPVG) has biased composition (pro residues). Serine 165 bears the Phosphoserine mark. Over residues 171-181 (DDIKRELRAEV) the composition is skewed to basic and acidic residues. Positions 182–262 (DIIEQMSSSS…LRNDLQLSES (81 aa)) are necessary for transactivation activity. The segment covering 188-213 (SSSSGSSSSDSESSSGSDDDSSSSGG) has biased composition (low complexity). Positions 238-268 (NGTSRPQGSNQLMNTLRNDLQLSESGSDSDD) are enriched in polar residues.

It belongs to the EAF family. As to quaternary structure, component of the super elongation complex (SEC), at least composed of EAF1, EAF2, CDK9, MLLT3/AF9, AFF (AFF1 or AFF4), the P-TEFb complex and ELL (ELL, ELL2 or ELL3). Interacts with ELL and ELL2. As to expression, strongly expressed in heart, brain, placenta, lung, liver, skeletal muscle, kidney, pancreas, spleen, prostate, testis, small intestine and colon. Poorly expressed in thymus.

The protein localises to the nucleus speckle. It localises to the nucleus. The protein resides in the cajal body. Functionally, acts as a transcriptional transactivator of ELL and ELL2 elongation activities. The protein is ELL-associated factor 1 (EAF1) of Homo sapiens (Human).